The primary structure comprises 303 residues: UDP-3-O-acyl-N-acetylglucosamine deacetylase (303 aa).

Residues His78, His237, and Asp241 each coordinate Zn(2+). His264 serves as the catalytic Proton donor.

This sequence belongs to the LpxC family. Zn(2+) serves as cofactor.

The enzyme catalyses a UDP-3-O-[(3R)-3-hydroxyacyl]-N-acetyl-alpha-D-glucosamine + H2O = a UDP-3-O-[(3R)-3-hydroxyacyl]-alpha-D-glucosamine + acetate. It participates in glycolipid biosynthesis; lipid IV(A) biosynthesis; lipid IV(A) from (3R)-3-hydroxytetradecanoyl-[acyl-carrier-protein] and UDP-N-acetyl-alpha-D-glucosamine: step 2/6. In terms of biological role, catalyzes the hydrolysis of UDP-3-O-myristoyl-N-acetylglucosamine to form UDP-3-O-myristoylglucosamine and acetate, the committed step in lipid A biosynthesis. The chain is UDP-3-O-acyl-N-acetylglucosamine deacetylase from Xanthomonas euvesicatoria pv. vesicatoria (strain 85-10) (Xanthomonas campestris pv. vesicatoria).